The chain runs to 86 residues: MANIKSAIKRAKTSEKRRVANSQEKAAMRTAVKRVDALVLEGNKEAAQEAFVLATKKLDKAASKGLIHKNKAGRDKSRLAARIAAL.

A disordered region spans residues 1 to 25 (MANIKSAIKRAKTSEKRRVANSQEK).

This sequence belongs to the bacterial ribosomal protein bS20 family.

Functionally, binds directly to 16S ribosomal RNA. The chain is Small ribosomal subunit protein bS20 from Exiguobacterium sp. (strain ATCC BAA-1283 / AT1b).